Here is a 313-residue protein sequence, read N- to C-terminus: MGNELQHRTVLLDEAVESLVTRPDGIYVDGTFGRGGHSRAVLARLAEAGRLIAFDKDPRAIETAQRIEDARFSIVHDSFASMRDALAARGIEKVSGVLLDLGVSSPQVDDPARGFSFRADGPLDMRMDPTRGESAAEWLARASVQELTEVIRDYGEERFAFQIAKALVARRAESDRLGPLDTTGELAQIVGHVVKTREKGKDPATRTFQAIRIHVNQELADLQVVLDAALSLLEQGGRLVVISFHSLEDRIVKRFMQAHASAPAVDRRLPIRAVDLPSPPLKIISRQFPSEAEVVANPRARSAVMRIAERVTP.

S-adenosyl-L-methionine-binding positions include 35–37, Asp-55, Phe-79, Asp-100, and Gln-107; that span reads GGH.

Belongs to the methyltransferase superfamily. RsmH family.

The protein resides in the cytoplasm. It carries out the reaction cytidine(1402) in 16S rRNA + S-adenosyl-L-methionine = N(4)-methylcytidine(1402) in 16S rRNA + S-adenosyl-L-homocysteine + H(+). Its function is as follows. Specifically methylates the N4 position of cytidine in position 1402 (C1402) of 16S rRNA. This chain is Ribosomal RNA small subunit methyltransferase H, found in Burkholderia ambifaria (strain MC40-6).